The chain runs to 50 residues: Defensin D1 (50 aa).

4 cysteine pairs are disulfide-bonded: Cys-3/Cys-50, Cys-14/Cys-35, Cys-20/Cys-44, and Cys-24/Cys-46.

Post-translationally, contains 4 disulfide bonds.

It is found in the secreted. Functionally, antimicrobial peptide active against fungi, Gram-positive and Gram-negative bacteria. Inhibits growth of hyphae in the fungi A.niger (IC(50)=3.5 ug/ml), B.sorokiniana (IC(50)=3.0 ug/ml), F.oxysporum (IC(50)=9.5 ug/ml), F.graminearum (IC(50)=6.9 ug/ml), F.culmorum (IC(50)=6.9 ug/ml) and B.cinerea (IC(50)=27.4 ug/ml). Has no effect on spore germination. Destroys spores in germinated conidia by disruption of cell walls and membranes in A.niger and B.sorokiniana. Causes vacuolization of germinated macro- and microconidia in F.oxysporum, F.graminearum and F.culmorum. Strongly inhibits growth of P.infestans on potato tubers above concentrations of 13.6 ug/ml. Inhibits growth of Gram-positive bacteria C.michiganensis and B.subtilis and of Gram-negative bacteria P.syringae, E.carotovora and E.coli. This Nigella sativa (Black cumin) protein is Defensin D1.